The chain runs to 156 residues: Mediator of RNA polymerase II transcription subunit 28 (156 aa).

The disordered stretch occupies residues Met1 to Ile38. Residues Pro104 to Val156 are a coiled coil.

Belongs to the Mediator complex subunit 28 family. As to quaternary structure, dimers. Component of the Mediator complex. Interacts with GEBPL.

It is found in the nucleus. In terms of biological role, component of the Mediator complex, a coactivator involved in the regulated transcription of nearly all RNA polymerase II-dependent genes. Mediator functions as a bridge to convey information from gene-specific regulatory proteins to the basal RNA polymerase II transcription machinery. The Mediator complex, having a compact conformation in its free form, is recruited to promoters by direct interactions with regulatory proteins and serves for the assembly of a functional pre-initiation complex with RNA polymerase II and the general transcription factors. This is Mediator of RNA polymerase II transcription subunit 28 from Arabidopsis thaliana (Mouse-ear cress).